We begin with the raw amino-acid sequence, 372 residues long: N-methyl-L-tryptophan oxidase (372 aa).

FAD is bound at residue 4 to 34 (DLIIIGSGSVGAAAGYYATRAGLKVLMTDAH). Cys-307 is subject to S-8alpha-FAD cysteine.

Belongs to the MSOX/MTOX family. MTOX subfamily. In terms of assembly, monomer. FAD is required as a cofactor.

The catalysed reaction is N(alpha)-methyl-L-tryptophan + O2 + H2O = L-tryptophan + formaldehyde + H2O2. Functionally, catalyzes the oxidative demethylation of N-methyl-L-tryptophan. The sequence is that of N-methyl-L-tryptophan oxidase from Salmonella typhimurium (strain LT2 / SGSC1412 / ATCC 700720).